The sequence spans 167 residues: MAPVCVLVGPPGSGKTTVGQALAELLGVEFRDTDLDVEATAGKPISEIFIDEGEAHFRALEREAVAAQLASATGVLALGGGAVLAEQTRAALVGHTVVYLSVELPDAVRRVGLGAGRPLLAVNPRATLKHLLDQRRPYYAAVATATVVTDGRTPEQLAVEVAALLAA.

12–17 (GSGKTT) contacts ATP. Thr16 is a binding site for Mg(2+). Positions 34, 58, and 80 each coordinate substrate. ATP is bound at residue Arg117. Position 135 (Arg135) interacts with substrate. Position 152 (Arg152) interacts with ATP.

It belongs to the shikimate kinase family. In terms of assembly, monomer. Mg(2+) is required as a cofactor.

It is found in the cytoplasm. It carries out the reaction shikimate + ATP = 3-phosphoshikimate + ADP + H(+). It participates in metabolic intermediate biosynthesis; chorismate biosynthesis; chorismate from D-erythrose 4-phosphate and phosphoenolpyruvate: step 5/7. Its function is as follows. Catalyzes the specific phosphorylation of the 3-hydroxyl group of shikimic acid using ATP as a cosubstrate. This is Shikimate kinase from Salinispora arenicola (strain CNS-205).